A 1894-amino-acid polypeptide reads, in one-letter code: Plexin-A1 (1894 aa).

The first 27 residues, 1–27, serve as a signal peptide directing secretion; it reads MPLPPLSSRTLLLLLLLLLRGVWIAIS. One can recognise a Sema domain in the interval 28–510; that stretch reads SPPAGLGPQP…TEKQVTQVPV (483 aa). Topologically, residues 28–1242 are extracellular; the sequence is SPPAGLGPQP…VYSDSLLTLP (1215 aa). Residue asparagine 75 is glycosylated (N-linked (GlcNAc...) asparagine). Intrachain disulfides connect cysteine 93–cysteine 102, cysteine 128–cysteine 136, cysteine 284–cysteine 405, cysteine 300–cysteine 356, cysteine 374–cysteine 393, cysteine 513–cysteine 530, cysteine 519–cysteine 561, cysteine 522–cysteine 539, cysteine 533–cysteine 545, and cysteine 596–cysteine 615. Asparagine 658, asparagine 670, and asparagine 699 each carry an N-linked (GlcNAc...) asparagine glycan. IPT/TIG domains lie at 862 to 957, 959 to 1043, 1046 to 1145, and 1148 to 1234; these read PKIL…FTFV, PTFY…YNYT, PTIL…FLYY, and PVLE…LQVY. Asparagine 1041 is a glycosylation site (N-linked (GlcNAc...) asparagine). 2 N-linked (GlcNAc...) asparagine glycosylation sites follow: asparagine 1185 and asparagine 1210. The chain crosses the membrane as a helical span at residues 1243–1263; the sequence is AIVGIGGGGGLLLLVIVAVLI. Positions 1262–1315 form a coiled coil; the sequence is LIAYKRKSRDADRTLKRLQLQMDNLESRVALECKEAFAELQTDIHELTSDLDGA. Over 1264–1894 the chain is Cytoplasmic; sequence AYKRKSRDAD…QVVDTMALSS (631 aa).

The protein belongs to the plexin family. As to quaternary structure, interacts directly with NRP1 and NRP2. Interacts with PLXN1B. Interacts with FARP2, RND1 and KDR/VEGFR2. Binding of SEMA3A leads to dissociation of FARP2. Interacts with CRMP1, DPYSL2/CRMP2, DPYSL3/CRMP3 and DPYSL4/CRMP4. Interacts (via TIG domains) with TREM2; the interaction mediates SEMA6D binding and signaling through TYROBP. In terms of tissue distribution, ubiquitous.

The protein resides in the cell membrane. Coreceptor for SEMA3A, SEMA3C, SEMA3F and SEMA6D. Necessary for signaling by class 3 semaphorins and subsequent remodeling of the cytoskeleton. Plays a role in axon guidance, invasive growth and cell migration. Class 3 semaphorins bind to a complex composed of a neuropilin and a plexin. The plexin modulates the affinity of the complex for specific semaphorins, and its cytoplasmic domain is required for the activation of down-stream signaling events in the cytoplasm. Acts as coreceptor of TREM2 for SEMA6D in dendritic cells and is involved in the generation of immune responses and skeletal homeostasis. This Mus musculus (Mouse) protein is Plexin-A1 (Plxna1).